Here is a 450-residue protein sequence, read N- to C-terminus: Probable ATP-dependent RNA helicase MG425 homolog (450 aa).

The short motif at 3-31 is the Q motif element; sequence STFNELGVSPALIATLKDNNINQPTTIQQ. Residues 34 to 206 enclose the Helicase ATP-binding domain; it reads IPQFLQHQNL…KQITKNGIFL (173 aa). 47–54 is an ATP binding site; it reads SPTGTGKT. Residues 154–157 carry the DEVD box motif; sequence DEVD. The Helicase C-terminal domain occupies 234 to 384; it reads RKKQALYSLV…PLRPMRLRLI (151 aa). The tract at residues 429–450 is disordered; it reads MRQPERDMQKNKLHDSDWQSNM. The span at 430–450 shows a compositional bias: basic and acidic residues; it reads RQPERDMQKNKLHDSDWQSNM.

It belongs to the DEAD box helicase family.

The catalysed reaction is ATP + H2O = ADP + phosphate + H(+). This Mycoplasma pneumoniae (strain ATCC 29342 / M129 / Subtype 1) (Mycoplasmoides pneumoniae) protein is Probable ATP-dependent RNA helicase MG425 homolog.